The chain runs to 185 residues: Small ribosomal subunit protein bS6 (185 aa).

Positions 115–141 (AAQKAAAEKAEAARLEAEKAAEEEAAK) are enriched in basic and acidic residues. The segment at 115–185 (AAQKAAAEKA…EEPKSDEEDA (71 aa)) is disordered. Over residues 142–169 (AAEAQAKEAPAAEAPAEEAPAAEAPAEA) the composition is skewed to low complexity. Acidic residues predominate over residues 170–185 (PAEEPAEEPKSDEEDA).

The protein belongs to the bacterial ribosomal protein bS6 family.

Binds together with bS18 to 16S ribosomal RNA. The sequence is that of Small ribosomal subunit protein bS6 from Desulfatibacillum aliphaticivorans.